The sequence spans 244 residues: L-xylulose reductase (244 aa).

N-acetylmethionine is present on Met1. Residue 11 to 39 participates in NADP(+) binding; it reads LVTGAGKGIGRSTVLALQAAGAHVVAVSR. Position 21 is an omega-N-methylarginine (Arg21). Ser46 bears the Phosphoserine mark. Ser136 is a substrate binding site. Tyr149 functions as the Proton acceptor in the catalytic mechanism. Residue Lys153 is part of the active site.

It belongs to the short-chain dehydrogenases/reductases (SDR) family. As to quaternary structure, homotetramer. In terms of tissue distribution, highly expressed in kidney and liver. Expressed in epididymis. Weakly expressed in brain, heart, lung, spleen and testis.

It is found in the membrane. The protein resides in the cytoplasmic vesicle. The protein localises to the secretory vesicle. Its subcellular location is the acrosome. The catalysed reaction is xylitol + NADP(+) = L-xylulose + NADPH + H(+). In terms of biological role, catalyzes the NADPH-dependent reduction of several pentoses, tetroses, trioses, alpha-dicarbonyl compounds and L-xylulose. Participates in the uronate cycle of glucose metabolism. May play a role in the water absorption and cellular osmoregulation in the proximal renal tubules by producing xylitol, an osmolyte, thereby preventing osmolytic stress from occurring in the renal tubules. The sequence is that of L-xylulose reductase (DCXR) from Mesocricetus auratus (Golden hamster).